The following is a 344-amino-acid chain: RNA 3'-terminal phosphate cyclase (344 aa).

Residues glutamine 103 and 283-287 each bind ATP; that span reads HLADQ. Catalysis depends on histidine 308, which acts as the Tele-AMP-histidine intermediate.

This sequence belongs to the RNA 3'-terminal cyclase family. Type 1 subfamily.

Its subcellular location is the cytoplasm. It catalyses the reaction a 3'-end 3'-phospho-ribonucleotide-RNA + ATP = a 3'-end 2',3'-cyclophospho-ribonucleotide-RNA + AMP + diphosphate. Functionally, catalyzes the conversion of 3'-phosphate to a 2',3'-cyclic phosphodiester at the end of RNA. The mechanism of action of the enzyme occurs in 3 steps: (A) adenylation of the enzyme by ATP; (B) transfer of adenylate to an RNA-N3'P to produce RNA-N3'PP5'A; (C) and attack of the adjacent 2'-hydroxyl on the 3'-phosphorus in the diester linkage to produce the cyclic end product. The biological role of this enzyme is unknown but it is likely to function in some aspects of cellular RNA processing. This chain is RNA 3'-terminal phosphate cyclase, found in Salmonella agona (strain SL483).